The following is a 255-amino-acid chain: MVLVLAEIITVGDELLTGNTVDSNSAYIAQRLTEKGFWVRRITTVGDDVKEIENAVREAISRKPEVLIISGGLGPTHDDVTMLGVANAIGRKLKLCEDCLERIKEFYEELHRKGLIDDPTLNEARKKMAYLPEGSEPLNNTEGAAPGAYVEYEGVKIFILPGMPREMKAMLESEVLPRLGERKFVQKKFLAEITDESKLAPILEDTIERFKVKIHSSPKGFGKYIGIIIFAEDDEVIGKVIRYIEGKGIKFREGW.

This sequence belongs to the CinA family.

This is Protein PH0439 from Pyrococcus horikoshii (strain ATCC 700860 / DSM 12428 / JCM 9974 / NBRC 100139 / OT-3).